Consider the following 260-residue polypeptide: Triosephosphate isomerase (260 aa).

11–13 (NWK) provides a ligand contact to substrate. The Electrophile role is filled by His-103. The Proton acceptor role is filled by Glu-175. Substrate is bound by residues Gly-181, Ser-220, and 241-242 (GG).

The protein belongs to the triosephosphate isomerase family. Homodimer.

It localises to the cytoplasm. The catalysed reaction is D-glyceraldehyde 3-phosphate = dihydroxyacetone phosphate. It functions in the pathway carbohydrate biosynthesis; gluconeogenesis. The protein operates within carbohydrate degradation; glycolysis; D-glyceraldehyde 3-phosphate from glycerone phosphate: step 1/1. Its function is as follows. Involved in the gluconeogenesis. Catalyzes stereospecifically the conversion of dihydroxyacetone phosphate (DHAP) to D-glyceraldehyde-3-phosphate (G3P). The polypeptide is Triosephosphate isomerase (Shewanella halifaxensis (strain HAW-EB4)).